We begin with the raw amino-acid sequence, 324 residues long: MSLLDKKISTWFMRQAGRYLPEYLKISKEMTFFQMCESPEIASEITLQPIKRFDLDAAIVFSDILVLPRALGCNIDIKKSTGPVIERINNPNWLTYDAFEEKISPTLNTIAITRKSLPQNKSLIGFAGGPWTVALYIIEGGWDKTFLRTKEFINKRYHEFKEIISILTDATIQYLNKQLKHGADFIQIFESFAWAASSNEFKEFIVEPTRRIVSSIDVPVIGFPKGAGVSYLQYVKETSVDVISTDHSLPLDWIADNLQTHAVVQGNLDPYLLAFNKKEALLQTERIVDAFSEKNFIFNLGHGIYKETPLSSVEAVLDFIRARN.

Residues 14–18 (RQAGR), F32, D63, Y136, S191, and H302 each bind substrate.

It belongs to the uroporphyrinogen decarboxylase family. As to quaternary structure, homodimer.

Its subcellular location is the cytoplasm. The catalysed reaction is uroporphyrinogen III + 4 H(+) = coproporphyrinogen III + 4 CO2. The protein operates within porphyrin-containing compound metabolism; protoporphyrin-IX biosynthesis; coproporphyrinogen-III from 5-aminolevulinate: step 4/4. Catalyzes the decarboxylation of four acetate groups of uroporphyrinogen-III to yield coproporphyrinogen-III. The chain is Uroporphyrinogen decarboxylase from Neorickettsia sennetsu (strain ATCC VR-367 / Miyayama) (Ehrlichia sennetsu).